Here is a 451-residue protein sequence, read N- to C-terminus: Methylenetetrahydrofolate--tRNA-(uracil-5-)-methyltransferase TrmFO (451 aa).

FAD is bound at residue 9-14 (GGGMAG).

Belongs to the MnmG family. TrmFO subfamily. Requires FAD as cofactor.

It is found in the cytoplasm. The catalysed reaction is uridine(54) in tRNA + (6R)-5,10-methylene-5,6,7,8-tetrahydrofolate + NADH + H(+) = 5-methyluridine(54) in tRNA + (6S)-5,6,7,8-tetrahydrofolate + NAD(+). The enzyme catalyses uridine(54) in tRNA + (6R)-5,10-methylene-5,6,7,8-tetrahydrofolate + NADPH + H(+) = 5-methyluridine(54) in tRNA + (6S)-5,6,7,8-tetrahydrofolate + NADP(+). Functionally, catalyzes the folate-dependent formation of 5-methyl-uridine at position 54 (M-5-U54) in all tRNAs. The sequence is that of Methylenetetrahydrofolate--tRNA-(uracil-5-)-methyltransferase TrmFO from Dinoroseobacter shibae (strain DSM 16493 / NCIMB 14021 / DFL 12).